Reading from the N-terminus, the 201-residue chain is Recombination protein RecR (201 aa).

A C4-type zinc finger spans residues 59–74; sequence CEICGNMDTENMCRIC. In terms of domain architecture, Toprim spans 82-177; that stretch reads SIIAIVETVA…KISRLASGIP (96 aa).

Belongs to the RecR family.

Its function is as follows. May play a role in DNA repair. It seems to be involved in an RecBC-independent recombinational process of DNA repair. It may act with RecF and RecO. The chain is Recombination protein RecR from Rickettsia conorii (strain ATCC VR-613 / Malish 7).